The primary structure comprises 172 residues: Odorant-binding protein (172 aa).

The N-terminal stretch at M1–C15 is a signal peptide. Cystine bridges form between C60/C64 and C79/C170.

The protein belongs to the calycin superfamily. Lipocalin family. In terms of assembly, homodimer.

The protein localises to the secreted. In terms of biological role, this protein is found in nasal epithelium and it binds a wide variety of chemical odorants. In Rattus norvegicus (Rat), this protein is Odorant-binding protein (Obp1f).